Here is a 305-residue protein sequence, read N- to C-terminus: Tyrosine recombinase XerD (305 aa).

One can recognise a Core-binding (CB) domain in the interval 9-94 (MQDFGYVEQF…AIRRLFQYLH (86 aa)). Residues 115 to 299 (RLPKDISEEQ…ATERLKQIHS (185 aa)) enclose the Tyr recombinase domain. Active-site residues include Arg155, Lys179, His251, Arg254, and His277. Tyr286 acts as the O-(3'-phospho-DNA)-tyrosine intermediate in catalysis.

It belongs to the 'phage' integrase family. XerD subfamily. In terms of assembly, forms a cyclic heterotetrameric complex composed of two molecules of XerC and two molecules of XerD.

It is found in the cytoplasm. Site-specific tyrosine recombinase, which acts by catalyzing the cutting and rejoining of the recombining DNA molecules. The XerC-XerD complex is essential to convert dimers of the bacterial chromosome into monomers to permit their segregation at cell division. It also contributes to the segregational stability of plasmids. The polypeptide is Tyrosine recombinase XerD (Vibrio vulnificus (strain CMCP6)).